Here is a 267-residue protein sequence, read N- to C-terminus: Pyridoxine/pyridoxamine 5'-phosphate oxidase (267 aa).

Substrate contacts are provided by residues 20-23 and lysine 80; that span reads RQGY. Residues 75–80, 90–91, arginine 96, lysine 97, and glutamine 119 contribute to the FMN site; these read RTVLLK and YT. 3 residues coordinate substrate: tyrosine 137, arginine 141, and serine 145. Residues 154 to 155 and tryptophan 200 contribute to the FMN site; that span reads QS. Residue 206-208 participates in substrate binding; the sequence is RLH. Arginine 210 is an FMN binding site.

This sequence belongs to the pyridoxamine 5'-phosphate oxidase family. In terms of assembly, homodimer. FMN serves as cofactor.

The catalysed reaction is pyridoxamine 5'-phosphate + O2 + H2O = pyridoxal 5'-phosphate + H2O2 + NH4(+). It catalyses the reaction pyridoxine 5'-phosphate + O2 = pyridoxal 5'-phosphate + H2O2. It functions in the pathway cofactor metabolism; pyridoxal 5'-phosphate salvage; pyridoxal 5'-phosphate from pyridoxamine 5'-phosphate: step 1/1. It participates in cofactor metabolism; pyridoxal 5'-phosphate salvage; pyridoxal 5'-phosphate from pyridoxine 5'-phosphate: step 1/1. Its function is as follows. Catalyzes the oxidation of either pyridoxine 5'-phosphate (PNP) or pyridoxamine 5'-phosphate (PMP) into pyridoxal 5'-phosphate (PLP). The protein is Pyridoxine/pyridoxamine 5'-phosphate oxidase of Frankia casuarinae (strain DSM 45818 / CECT 9043 / HFP020203 / CcI3).